The sequence spans 700 residues: Cap-specific mRNA (nucleoside-2'-O-)-methyltransferase 2 (700 aa).

Residues 1-21 (MSFRSSPQGKPHPMTDYQSIR) are disordered. In terms of domain architecture, Adrift-type SAM-dependent 2'-O-MTase spans 109–321 (EFVTVAWCKL…VYVICLNYNK (213 aa)). The active site involves K117. S-adenosyl-L-methionine is bound by residues G143, W164, and D234. D234 is an active-site residue. Residue K274 is the Proton acceptor of the active site.

It is found in the nucleus. The catalysed reaction is a 5'-end (N(7)-methyl 5'-triphosphoguanosine)-(2'-O-methyl-ribonucleoside)-(ribonucleotide) in mRNA + S-adenosyl-L-methionine = a 5'-end (N(7)-methyl 5'-triphosphoguanosine)-(2'-O-methyl-ribonucleoside)-(2'-O-methyl-ribonucleotide) in mRNA + S-adenosyl-L-homocysteine + H(+). Functionally, probable S-adenosyl-L-methionine-dependent methyltransferase that mediates mRNA cap2 2'-O-ribose methylation to the 5'-cap structure of mRNAs. May methylate the ribose of the second nucleotide of a m(7)GpppG-capped mRNA (cap0) to produce m(7)GpppRmpNm (cap2). Regulates expression of tracheal genes required for pathfinding on the segmental nerve. This is Cap-specific mRNA (nucleoside-2'-O-)-methyltransferase 2 (cmtr2) from Drosophila melanogaster (Fruit fly).